The primary structure comprises 94 residues: Enhancer of yellow 2 transcription factor (94 aa).

This sequence belongs to the ENY2 family. In terms of assembly, component of the nuclear pore complex (NPC)-associated AMEX complex (anchoring and mRNA export complex), composed of at least e(y)2 and xmas-2. Component of the SAGA transcription coactivator-HAT complexes, at least composed of Ada2b, e(y)2, Pcaf/Gcn5, Taf10 and Nipped-A/Trrap. Within the SAGA complex, e(y)2, Sgf11, and not/nonstop form an additional subcomplex of SAGA called the DUB module (deubiquitination module). Component of the THO complex, composed of at least e(y)2, HPR1, THO2, THOC5, THOC6 and THOC7. Interacts with e(y)1. Interacts with su(Hw) (via zinc fingers). Interacts with xmas-2; required for localization to the nuclear periphery. Interacts with the nuclear pore complex (NPC).

The protein localises to the nucleus. It is found in the nucleoplasm. It localises to the cytoplasm. Functionally, involved in mRNA export coupled transcription activation by association with both the AMEX and the SAGA complexes. The SAGA complex is a multiprotein complex that activates transcription by remodeling chromatin and mediating histone acetylation and deubiquitination. Within the SAGA complex, participates in a subcomplex that specifically deubiquitinates histone H2B. The SAGA complex is recruited to specific gene promoters by activators, where it is required for transcription. Required for nuclear receptor-mediated transactivation. Involved in transcription elongation by recruiting the THO complex onto nascent mRNA. The AMEX complex functions in docking export-competent ribonucleoprotein particles (mRNPs) to the nuclear entrance of the nuclear pore complex (nuclear basket). AMEX participates in mRNA export and accurate chromatin positioning in the nucleus by tethering genes to the nuclear periphery. The polypeptide is Enhancer of yellow 2 transcription factor (Drosophila grimshawi (Hawaiian fruit fly)).